The sequence spans 963 residues: Thrombospondin-4 (963 aa).

A signal peptide spans 1 to 26 (MPAPRAAAAAFLLLHLVLQPWQRTSA). The region spanning 29–194 (TPQVFDLLPS…LEELKLVVRG (166 aa)) is the Laminin G-like domain. The short motif at 138 to 140 (RGD) is the Cell attachment site element. One can recognise an EGF-like 1 domain in the interval 288-327 (PTRHCDSSPCFRGVRCTDTRDGFQCGPCPDGYTGNGITCS). Disulfide bonds link Cys292/Cys303, Cys297/Cys312, Cys315/Cys326, Cys332/Cys343, Cys337/Cys352, Cys355/Cys379, Cys385/Cys396, Cys390/Cys405, Cys408/Cys420, Cys426/Cys440, Cys434/Cys450, Cys452/Cys463, Cys479/Cys484, Cys489/Cys509, Cys525/Cys545, Cys548/Cys568, Cys584/Cys604, Cys607/Cys627, Cys645/Cys665, Cys685/Cys705, and Cys721/Cys942. Positions 328 to 365 (DVDECKYHPCYPGVRCVNLAPGFRCDACPVGFTGPMVQ) constitute an EGF-like 2; calcium-binding domain. The 38-residue stretch at 381 to 418 (DVDECQNGACVLNSICINTLGSYRCGPCKPGYTGDQTR) folds into the EGF-like 3; calcium-binding domain. One can recognise an EGF-like 4 domain in the interval 422 to 464 (TERSCRNPEQNPCSVHAQCIEERQGDVTCVCGVGWAGDGYVCG). TSP type-3 repeat units follow at residues 465–497 (KDVDIDSYPDEELPCSARNCKKDNCKYVPNSGQ), 498–533 (EDADRDGIGDACDEDADGDGILNEQDNCVLTHNIDQ), 534–556 (RNSDKDIFGDACDNCRMVLNNDQ), 557–592 (KDTDGDGRGDACDDDMDGDGIKNILDNCPRVPNRDQ), 593–615 (QDRDGDDVGDACDSCPDVSNPNQ), 616–653 (SDVDNDLVGDSCDTNQDSDGDGHQDSTDNCPTVINSSQ), 654–693 (LDTDKDGIGDECDDDDDNDGIPDLVPPGPDNCRLVPNPAQ), and 694–729 (EDSNNDGVGDICEADFDQDQVIDHIDVCPENAEITL). Positions 564–566 (RGD) match the Cell attachment site motif. The segment at 579–676 (NILDNCPRVP…DDDDNDGIPD (98 aa)) is disordered. N-linked (GlcNAc...) asparagine glycosylation is found at Asn614 and Asn650. Polar residues predominate over residues 642-654 (TDNCPTVINSSQL). Positions 662-673 (GDECDDDDDNDG) are enriched in acidic residues. The 215-residue stretch at 733–947 (RAYQTVVLDP…LKYRCNDTIP (215 aa)) folds into the TSP C-terminal domain. Asn943 carries N-linked (GlcNAc...) asparagine glycosylation.

It belongs to the thrombospondin family. As to quaternary structure, homopentamer; disulfide-linked. Interacts with PTBP3. Interacts (via EGF-like 3; calcium-binding domain) with ATF6 and facilitates its processing, activation and nuclear translocation. Interacts with NOTCH1. As to expression, heart. Up-regulated in the heart in response to ischemic injury and pathology (at protein level). Astrocytes; expressed at high levels in subventricular zone (SVZ)-derived astrocytes and at low levels in cortical astrocytes. In response to peripheral nerve injury, significantly up-regulated in the dorsal spinal cord (at protein level).

The protein localises to the endoplasmic reticulum. It is found in the sarcoplasmic reticulum. Its subcellular location is the secreted. The protein resides in the extracellular space. It localises to the extracellular matrix. Functionally, adhesive glycoprotein that mediates cell-to-cell and cell-to-matrix interactions and is involved in various processes including cellular proliferation, migration, adhesion and attachment, inflammatory response to CNS injury, regulation of vascular inflammation and adaptive responses of the heart to pressure overload and in myocardial function and remodeling. Binds to structural extracellular matrix (ECM) proteins and modulates the ECM in response to tissue damage, contributing to cardioprotective and adaptive ECM remodeling. Plays a role in ER stress response, via its interaction with the activating transcription factor 6 alpha (ATF6) which produces adaptive ER stress response factors and protects myocardium from pressure overload. May contribute to spinal presynaptic hypersensitivity and neuropathic pain states after peripheral nerve injury. May play a role in regulating protective astrogenesis from the subventricular zone (SVZ) niche after injury in a NOTCH1-dependent manner. The polypeptide is Thrombospondin-4 (Thbs4) (Mus musculus (Mouse)).